The following is a 439-amino-acid chain: Acyl-coenzyme A thioesterase 10, mitochondrial (439 aa).

The N-terminal 21 residues, 1–21 (MKRAAMRLWTLNKGLLTHGRG), are a transit peptide targeting the mitochondrion. HotDog ACOT-type domains follow at residues 85–209 (SYIE…QDSE) and 289–401 (EDTK…EKEV).

This sequence belongs to the acyl coenzyme A hydrolase family.

Its subcellular location is the mitochondrion. In terms of biological role, catalyzes the hydrolysis of acyl-CoAs into free fatty acids and coenzyme A (CoASH), regulating their respective intracellular levels. Active on long chain acyl-CoAs. This Mus musculus (Mouse) protein is Acyl-coenzyme A thioesterase 10, mitochondrial.